A 727-amino-acid chain; its full sequence is Putative E3 ubiquitin-protein ligase UNKL (727 aa).

Positions 1-21 (MPSVSKAAAAALSGSPPQTEK) are disordered. 4 C3H1-type zinc fingers span residues 75 to 104 (YSPD…HRTT), 115 to 145 (YYKT…HGPL), 243 to 277 (QYRS…HSRT), and 285 to 313 (IYKS…HTEK). The segment covering 330-339 (STSAYSSQPG) has biased composition (polar residues). Disordered stretches follow at residues 330–360 (STSA…DSKQ), 446–514 (LTGP…ATLG), and 543–562 (SPSP…SPNS). Residues 463 to 495 (SLPRSPSLHSSSSLSTSPLSSLSQSLSGPLVSS) are compositionally biased toward low complexity. An RING-type zinc finger spans residues 686-721 (CVACQERAHGTVLRPCQHRVLCEPCAASTPECPYCK).

The protein belongs to the unkempt family. As to quaternary structure, interacts with the GTP-bound form of Rac1. Interacts with Baf60b/Smarcd2. Post-translationally, ubiquitination is enhanced by activated Rac1. The presence of the RING finger domain is not essential for ubiquitination to occur. In terms of tissue distribution, ubiquitous.

It localises to the cytoplasm. The protein resides in the nucleus. Its pathway is protein modification; protein ubiquitination. Its function is as follows. May participate in a protein complex showing an E3 ligase activity regulated by Rac1. Ubiquitination is directed towards itself and possibly other substrates, such as Baf60b/Smarcd2. Intrinsic E3 ligase activity has not been proven. This chain is Putative E3 ubiquitin-protein ligase UNKL (Unkl), found in Mus musculus (Mouse).